Reading from the N-terminus, the 433-residue chain is Serine hydroxymethyltransferase (433 aa).

(6S)-5,6,7,8-tetrahydrofolate contacts are provided by residues Leu-127 and 131–133 (GHL). Lys-236 bears the N6-(pyridoxal phosphate)lysine mark.

This sequence belongs to the SHMT family. In terms of assembly, homodimer. Pyridoxal 5'-phosphate is required as a cofactor.

The protein resides in the cytoplasm. It catalyses the reaction (6R)-5,10-methylene-5,6,7,8-tetrahydrofolate + glycine + H2O = (6S)-5,6,7,8-tetrahydrofolate + L-serine. Its pathway is one-carbon metabolism; tetrahydrofolate interconversion. It functions in the pathway amino-acid biosynthesis; glycine biosynthesis; glycine from L-serine: step 1/1. In terms of biological role, catalyzes the reversible interconversion of serine and glycine with tetrahydrofolate (THF) serving as the one-carbon carrier. This reaction serves as the major source of one-carbon groups required for the biosynthesis of purines, thymidylate, methionine, and other important biomolecules. Also exhibits THF-independent aldolase activity toward beta-hydroxyamino acids, producing glycine and aldehydes, via a retro-aldol mechanism. This is Serine hydroxymethyltransferase from Corynebacterium urealyticum (strain ATCC 43042 / DSM 7109).